The sequence spans 543 residues: Chaperonin GroEL (543 aa).

ATP contacts are provided by residues 29 to 32 (TLGP), 86 to 90 (DGTTT), G413, 476 to 478 (NAA), and D492.

Belongs to the chaperonin (HSP60) family. In terms of assembly, forms a cylinder of 14 subunits composed of two heptameric rings stacked back-to-back. Interacts with the co-chaperonin GroES.

The protein localises to the cytoplasm. The enzyme catalyses ATP + H2O + a folded polypeptide = ADP + phosphate + an unfolded polypeptide.. Its function is as follows. Together with its co-chaperonin GroES, plays an essential role in assisting protein folding. The GroEL-GroES system forms a nano-cage that allows encapsulation of the non-native substrate proteins and provides a physical environment optimized to promote and accelerate protein folding. The protein is Chaperonin GroEL of Streptococcus pyogenes serotype M18 (strain MGAS8232).